A 407-amino-acid polypeptide reads, in one-letter code: MMEKHYVGSEIGQLRSVMLHRPNLSLKRLTPSNCQELLFDDVLSVERAGEEHDIFANTLRQQGIEVLLLTDLLTQTLDIPEAKSWLLETQISDYRLGPTFATDVRTWLAEMSHRDLARHLSGGLTYSEIPASIKNMVVDTHDINDFIMKPLPNHLFTRDTSCWIYNGVSINPMAKPARQRETNNLRAIYRWHPQFAGGEFIKYFGDENINYDHATLEGGDVLVIGRGAVLIGMSERTTPQGIEFLAQALFKHRQAERVIAVELPKHRSCMHLDTVMTHIDIDTFSVYPEVVRPDVNCWTLTPDGHGGLKRTQESTLLHAIEKALGIDQVRLITTGGDAFEAEREQWNDANNVLTLRPGVVVGYERNIWTNEKYDKAGITVLPIPGDELGRGRGGARCMSCPLHRDGI.

Residue cysteine 397 is the Amidino-cysteine intermediate of the active site.

Belongs to the arginine deiminase family.

The protein resides in the cytoplasm. It carries out the reaction L-arginine + H2O = L-citrulline + NH4(+). Its pathway is amino-acid degradation; L-arginine degradation via ADI pathway; carbamoyl phosphate from L-arginine: step 1/2. This chain is Arginine deiminase (arcA), found in Escherichia coli O6:H1 (strain CFT073 / ATCC 700928 / UPEC).